A 244-amino-acid chain; its full sequence is Signal recognition particle receptor subunit beta (244 aa).

The chain crosses the membrane as a helical span at residues 7 to 23 (IIACLLVIGTTIALIAV). GTP is bound by residues 45-53 (GPQNSGKTS), 66-69 (TVVS), G90, and 154-157 (NKSE).

This sequence belongs to the SRP receptor beta subunit family. In terms of assembly, heterodimer of an alpha and a beta chain.

The protein resides in the endoplasmic reticulum membrane. Its function is as follows. Component of the signal recognition particle (SRP) complex receptor (SR). Ensures, in conjunction with the SRP complex, the correct targeting of the nascent secretory proteins to the endoplasmic reticulum membrane system. May mediate the membrane association of SR. The chain is Signal recognition particle receptor subunit beta (SRP102) from Saccharomyces cerevisiae (strain ATCC 204508 / S288c) (Baker's yeast).